A 312-amino-acid chain; its full sequence is DNA-directed RNA polymerase subunit alpha (312 aa).

The segment at 1 to 229 is alpha N-terminal domain (alpha-NTD); it reads MLQYQIDRID…ELFQPLATVT (229 aa). Positions 241 to 312 are alpha C-terminal domain (alpha-CTD); sequence SPEAQIPLEE…ISIPQSRTSV (72 aa).

It belongs to the RNA polymerase alpha chain family. In terms of assembly, in cyanobacteria the RNAP catalytic core is composed of 2 alpha, 1 beta, 1 beta', 1 gamma and 1 omega subunit. When a sigma factor is associated with the core the holoenzyme is formed, which can initiate transcription.

The enzyme catalyses RNA(n) + a ribonucleoside 5'-triphosphate = RNA(n+1) + diphosphate. In terms of biological role, DNA-dependent RNA polymerase catalyzes the transcription of DNA into RNA using the four ribonucleoside triphosphates as substrates. This Prochlorococcus marinus (strain MIT 9215) protein is DNA-directed RNA polymerase subunit alpha.